Here is a 414-residue protein sequence, read N- to C-terminus: MSGMLGLSAVMGKRPKQQVTARPRKCPIEKPEEIPDDLLIDVFSRLSIEDVARCRCLSRFWSSILRRRYFTELFHKMSSTRPRILFTFLYYGKRLFYSMPQDLDPSNHYSPLPYFSISYSPISAHYQMHFPKVLGASAKVCPPILGLICCKSSKTMIFNPSTRESKFISTTKRVGVKSTSFGYDPIDKLFKVLSMSDDFVCRVSTLGTEVVTWRTVECSVPHHPLHSEICMDGVLYYLARRVGDETPKPYMVAAFEVRLERFKFLPMDLRCKHIGCSAVIDYKGKLAVVWLNVDRDNQRHIESFELRVLNDVDEVKWSQIIYELPNYWNNLPADIDVSIVGMTSAGEIVLATSHIRHPFYIFYYSTVTLAIVQLRIDFGIEAPEANHCSTMSTFVNHVENVELACGLGLSSIAM.

Residues 1–24 (MSGMLGLSAVMGKRPKQQVTARPR) are disordered. Residues 28 to 77 (IEKPEEIPDDLLIDVFSRLSIEDVARCRCLSRFWSSILRRRYFTELFHKM) form the F-box domain.

The chain is F-box protein At3g47030 from Arabidopsis thaliana (Mouse-ear cress).